A 273-amino-acid chain; its full sequence is Putative phosphoenolpyruvate synthase regulatory protein (273 aa).

153 to 160 (GVSRSGKT) lines the ADP pocket.

The protein belongs to the pyruvate, phosphate/water dikinase regulatory protein family. PSRP subfamily.

It carries out the reaction [pyruvate, water dikinase] + ADP = [pyruvate, water dikinase]-phosphate + AMP + H(+). The enzyme catalyses [pyruvate, water dikinase]-phosphate + phosphate + H(+) = [pyruvate, water dikinase] + diphosphate. Functionally, bifunctional serine/threonine kinase and phosphorylase involved in the regulation of the phosphoenolpyruvate synthase (PEPS) by catalyzing its phosphorylation/dephosphorylation. The polypeptide is Putative phosphoenolpyruvate synthase regulatory protein (Leptothrix cholodnii (strain ATCC 51168 / LMG 8142 / SP-6) (Leptothrix discophora (strain SP-6))).